The sequence spans 326 residues: Aspartate carbamoyltransferase catalytic subunit (326 aa).

Arg-55 and Thr-56 together coordinate carbamoyl phosphate. Lys-83 provides a ligand contact to L-aspartate. Residues Arg-105, His-135, and Gln-138 each contribute to the carbamoyl phosphate site. Positions 176 and 230 each coordinate L-aspartate. 2 residues coordinate carbamoyl phosphate: Gly-271 and Pro-272.

It belongs to the aspartate/ornithine carbamoyltransferase superfamily. ATCase family. Heterododecamer (2C3:3R2) of six catalytic PyrB chains organized as two trimers (C3), and six regulatory PyrI chains organized as three dimers (R2).

It catalyses the reaction carbamoyl phosphate + L-aspartate = N-carbamoyl-L-aspartate + phosphate + H(+). It functions in the pathway pyrimidine metabolism; UMP biosynthesis via de novo pathway; (S)-dihydroorotate from bicarbonate: step 2/3. Functionally, catalyzes the condensation of carbamoyl phosphate and aspartate to form carbamoyl aspartate and inorganic phosphate, the committed step in the de novo pyrimidine nucleotide biosynthesis pathway. The polypeptide is Aspartate carbamoyltransferase catalytic subunit (Streptomyces coelicolor (strain ATCC BAA-471 / A3(2) / M145)).